Reading from the N-terminus, the 290-residue chain is uncharacterized protein (290 aa).

The protein belongs to the UreD family.

It is found in the cytoplasm. Its subcellular location is the nucleus. In terms of biological role, probably facilitates nickel incorporation. This is an uncharacterized protein from Schizosaccharomyces pombe (strain 972 / ATCC 24843) (Fission yeast).